Here is a 222-residue protein sequence, read N- to C-terminus: Thiol:disulfide interchange protein DsbL (222 aa).

Residues 1-27 form the signal peptide; it reads MSAKWINSIFKSVVLTAALALPFTASA. Residues 28 to 221 form the Thioredoxin domain; it reads FTEGTDYMVL…MAQLVRELAT (194 aa). Residues cysteine 56 and cysteine 59 are joined by a disulfide bond.

Belongs to the thioredoxin family. DsbL subfamily. Interacts with DsbI.

It is found in the periplasm. Functionally, involved in disulfide-bond formation. Acts by transferring its disulfide bond to other proteins. Part of a redox system composed of DsbI and DsbL that mediates formation of an essential disulfide bond in AssT. The protein is Thiol:disulfide interchange protein DsbL of Lelliottia amnigena (Enterobacter amnigenus).